The primary structure comprises 108 residues: Large ribosomal subunit protein uL11 (108 aa).

This sequence belongs to the universal ribosomal protein uL11 family. As to quaternary structure, part of the ribosomal stalk of the 50S ribosomal subunit. Interacts with L10 and the large rRNA to form the base of the stalk. L10 forms an elongated spine to which L12 dimers bind in a sequential fashion forming a multimeric L10(L12)X complex.

Functionally, forms part of the ribosomal stalk which helps the ribosome interact with GTP-bound translation factors. The polypeptide is Large ribosomal subunit protein uL11 (rpl11) (Aeropyrum pernix (strain ATCC 700893 / DSM 11879 / JCM 9820 / NBRC 100138 / K1)).